The following is a 32-amino-acid chain: MSDIN-like toxin proprotein a (32 aa).

A propeptide spanning residues 1-10 is cleaved from the precursor; the sequence is MSDINATRLP. Positions 11–18 form a cross-link, cyclopeptide (Ile-Pro); that stretch reads IIGILLPP. A propeptide spanning residues 19-32 is cleaved from the precursor; sequence CIGDDVTLLLTRGE.

Belongs to the MSDIN fungal toxin family. In terms of processing, processed by the macrocyclase-peptidase enzyme POPB to yield a toxic cyclic octapeptide. POPB first removes 10 residues from the N-terminus. Conformational trapping of the remaining peptide forces the enzyme to release this intermediate rather than proceed to macrocyclization. The enzyme rebinds the remaining peptide in a different conformation and catalyzes macrocyclization of the N-terminal 8 residues.

Its function is as follows. Probable toxin that belongs to the MSDIN-like toxin family responsible for a large number of food poisoning cases and deaths. The sequence is that of MSDIN-like toxin proprotein a from Amanita phalloides (Death cap).